A 209-amino-acid polypeptide reads, in one-letter code: Uracil phosphoribosyltransferase (209 aa).

5-phospho-alpha-D-ribose 1-diphosphate contacts are provided by residues arginine 79, arginine 104, and 131–139 (DPMLATGGS). Uracil is bound by residues isoleucine 194 and 199–201 (GDA). Residue aspartate 200 coordinates 5-phospho-alpha-D-ribose 1-diphosphate.

This sequence belongs to the UPRTase family. Requires Mg(2+) as cofactor.

It catalyses the reaction UMP + diphosphate = 5-phospho-alpha-D-ribose 1-diphosphate + uracil. It participates in pyrimidine metabolism; UMP biosynthesis via salvage pathway; UMP from uracil: step 1/1. Its activity is regulated as follows. Allosterically activated by GTP. Its function is as follows. Catalyzes the conversion of uracil and 5-phospho-alpha-D-ribose 1-diphosphate (PRPP) to UMP and diphosphate. This is Uracil phosphoribosyltransferase from Oceanobacillus iheyensis (strain DSM 14371 / CIP 107618 / JCM 11309 / KCTC 3954 / HTE831).